Consider the following 364-residue polypeptide: Homeobox protein Nkx-6.1 (364 aa).

The interval Leu35–Ser134 is disordered. Composition is skewed to low complexity over residues Pro48–Ala92 and Ala109–Ser134. The tract at residues Leu101–Arg268 is repressor domain. Arg189 is modified (asymmetric dimethylarginine). A DNA-binding region (homeobox) is located at residues Arg236–His295. Residues Lys294 to Ser364 form a disordered region. Residues Lys304–Ser317 show a composition bias toward basic and acidic residues. The segment at Gln306 to Ser364 is involved in DNA-binding.

In terms of tissue distribution, pancreatic beta cells.

Its subcellular location is the nucleus. Together with NKX2-2 and IRX3 acts to restrict the generation of motor neurons to the appropriate region of the neural tube. Belongs to the class II proteins of neuronal progenitor factors, which are induced by SHH signals. Transcription factor which binds to specific A/T-rich DNA sequences in the promoter regions of a number of genes. Involved in transcriptional regulation in islet beta cells. Binds to the insulin promoter and is involved in regulation of the insulin gene. This is Homeobox protein Nkx-6.1 (NKX6-1) from Mesocricetus auratus (Golden hamster).